A 697-amino-acid polypeptide reads, in one-letter code: Elongation factor G (697 aa).

Residues 8–290 (ERYRNIGIMA…AVLSYMPSPV (283 aa)) form the tr-type G domain. Residues 17-24 (AHIDAGKT), 88-92 (DTPGH), and 142-145 (NKMD) contribute to the GTP site.

The protein belongs to the TRAFAC class translation factor GTPase superfamily. Classic translation factor GTPase family. EF-G/EF-2 subfamily.

The protein resides in the cytoplasm. Functionally, catalyzes the GTP-dependent ribosomal translocation step during translation elongation. During this step, the ribosome changes from the pre-translocational (PRE) to the post-translocational (POST) state as the newly formed A-site-bound peptidyl-tRNA and P-site-bound deacylated tRNA move to the P and E sites, respectively. Catalyzes the coordinated movement of the two tRNA molecules, the mRNA and conformational changes in the ribosome. This Nitrosococcus oceani (strain ATCC 19707 / BCRC 17464 / JCM 30415 / NCIMB 11848 / C-107) protein is Elongation factor G.